The primary structure comprises 181 residues: MMLPRSMKFMTGRRIFHTATVRAFQSTAKKSLTIPFLPVLPQKPGGVRGTPNDAYVPPPENKLEGSYHWYMEKIFALSVVPLATTAMLTTGPLSTAADSFFSVMLLGYCYMEFNSCITDYISERVYGVWHKYAMYMLGLGSAVSLFGIYKLETENDGVVGLVKSLWDSSEKDNSQKIEAKK.

Residues 1–31 constitute a mitochondrion transit peptide; the sequence is MMLPRSMKFMTGRRIFHTATVRAFQSTAKKS. The Mitochondrial matrix segment spans residues 32-66; that stretch reads LTIPFLPVLPQKPGGVRGTPNDAYVPPPENKLEGS. The helical transmembrane segment at 67–88 threads the bilayer; the sequence is YHWYMEKIFALSVVPLATTAML. Over 89–98 the chain is Mitochondrial intermembrane; sequence TTGPLSTAAD. A helical membrane pass occupies residues 99-118; that stretch reads SFFSVMLLGYCYMEFNSCIT. Residue cysteine 109 participates in heme binding. At 119 to 127 the chain is on the mitochondrial matrix side; sequence DYISERVYG. Residue tyrosine 120 participates in a ubiquinone binding. A helical membrane pass occupies residues 128-148; sequence VWHKYAMYMLGLGSAVSLFGI. Residues 149 to 181 are Mitochondrial intermembrane-facing; the sequence is YKLETENDGVVGLVKSLWDSSEKDNSQKIEAKK.

This sequence belongs to the CybS family. Forms part of complex II containing four subunits: a flavoprotein (FP), an iron-sulfur protein (IP) and a cytochrome b composed of a large and a small subunit.

The protein resides in the mitochondrion inner membrane. It functions in the pathway carbohydrate metabolism; tricarboxylic acid cycle. Membrane-anchoring subunit of succinate dehydrogenase (SDH) that is involved in system II of the mitochondrial electron transport chain and is responsible for transferring electrons from succinate to ubiquinone (coenzyme Q). SDH3 and SDH4 form the membrane dimer that anchors the catalytic dimer formed by SDH1 and SDH2 to the matrix surface of the mitochondrial inner membrane. Electrons originating from the catalytic dimer enter the membrane dimer for ubiquinone reduction. This Saccharomyces cerevisiae (strain ATCC 204508 / S288c) (Baker's yeast) protein is Succinate dehydrogenase [ubiquinone] cytochrome b small subunit, mitochondrial (SDH4).